The primary structure comprises 160 residues: Protein max (160 aa).

Over residues 1–13 (MSDNDDIEVESDE) the composition is skewed to acidic residues. The tract at residues 1–40 (MSDNDDIEVESDEEQPRFQSAADKRAHHNALERKRRDHIK) is disordered. S2 is modified (N-acetylserine). A phosphoserine mark is found at S2 and S11. Residues 23-74 (DKRAHHNALERKRRDHIKDSFHSLRDSVPSLQGEKASRAQILDKATEYIQYM) enclose the bHLH domain. Residues 29-40 (NALERKRRDHIK) are compositionally biased toward basic and acidic residues. K66 is modified (N6-acetyllysine). The segment at 81–102 (HQQDIDDLKRQNALLEQQVRAL) is leucine-zipper. The disordered stretch occupies residues 105-160 (ARSSAQLQTNYPSSDNSLYTNAKGGTISAFDGGSDSSSESEPEEPQNRKKLRMEAS). Position 107 is a phosphoserine (S107). A compositionally biased stretch (polar residues) spans 107–124 (SSAQLQTNYPSSDNSLYT). An N6-acetyllysine mark is found at K153 and K154.

Belongs to the MAX family. In terms of assembly, efficient DNA binding requires dimerization with another bHLH protein. Binds DNA as a heterodimer with MYC or MAD. Part of the E2F6.com-1 complex in G0 phase composed of E2F6, MGA, MAX, TFDP1, CBX3, BAT8, EUHMTASE1, RING1, RNF2, MBLR, L3MBTL2 and YAF2. Component of some MLL1/MLL complex, at least composed of the core components KMT2A/MLL1, ASH2L, HCFC1/HCF1, WDR5 and RBBP5, as well as the facultative components BACC1, CHD8, E2F6, HSP70, INO80C, KANSL1, LAS1L, MAX, MCRS1, MGA, MYST1/MOF, PELP1, PHF20, PRP31, RING2, RUVB1/TIP49A, RUVB2/TIP49B, SENP3, TAF1, TAF4, TAF6, TAF7, TAF9 and TEX10. Interacts with SPAG9. The heterodimer MYC:MAX interacts with ABI1; the interaction may enhance MYC:MAX transcriptional activity. Phosphorylated.

The protein localises to the nucleus. Its subcellular location is the cell projection. It localises to the dendrite. Its function is as follows. Transcription regulator. Forms a sequence-specific DNA-binding protein complex with MYC or MAD which recognizes the core sequence 5'-CAC[GA]TG-3'. The MYC:MAX complex is a transcriptional activator, whereas the MAD:MAX complex is a repressor. May repress transcription via the recruitment of a chromatin remodeling complex containing H3 'Lys-9' histone methyltransferase activity. Represses MYC transcriptional activity from E-box elements. The polypeptide is Protein max (Rattus norvegicus (Rat)).